Reading from the N-terminus, the 737-residue chain is Transcriptional repressor CTCF (737 aa).

Met-1 carries the post-translational modification N-acetylmethionine. Lys-18 is covalently cross-linked (Glycyl lysine isopeptide (Lys-Gly) (interchain with G-Cter in SUMO2)). Lys-74 participates in a covalent cross-link: Glycyl lysine isopeptide (Lys-Gly) (interchain with G-Cter in SUMO). Residues 180-211 form a disordered region; the sequence is QGELPPQEDPSWQKDPDYQPPAKKTKKTKKSK. The segment covering 202–211 has biased composition (basic residues); it reads KKTKKTKKSK. Lys-219 is covalently cross-linked (Glycyl lysine isopeptide (Lys-Gly) (interchain with G-Cter in SUMO2)). A C2H2-type 1 zinc finger spans residues 266–288; it reads FQCELCSYTCPRRSNLDRHMKSH. Thr-289 carries the phosphothreonine modification. Residues 294–316 form a C2H2-type 2 zinc finger; the sequence is HKCHLCGRAFRTVTLLRNHLNTH. Residue Thr-317 is modified to Phosphothreonine. 2 C2H2-type zinc fingers span residues 322–345 and 351–373; these read HKCP…RYKH and FKCS…IRSH. Residue Thr-374 is modified to Phosphothreonine. The C2H2-type 5 zinc finger occupies 379 to 401; it reads FQCSLCSYASRDTYKLKRHMRTH. Phosphoserine is present on Ser-402. 5 C2H2-type zinc fingers span residues 407-430, 437-460, 467-489, 495-517, and 523-546; these read YECY…LQKH, FHCP…RKQH, KKCR…QKSH, FKCD…KRTH, and YACS…KRYH. The C2H2-type 11; atypical zinc-finger motif lies at 555 to 577; the sequence is FVCSKCGKTFTRRNTMARHADNC. 2 disordered regions span residues 573–687 and 699–727; these read HADN…EDQN and KKEP…GDLT. Residues 593–604 are compositionally biased toward basic residues; it reads KSKRGRKRKMRS. A phosphoserine mark is found at Ser-609, Ser-610, and Ser-612. The span at 610 to 636 shows a compositional bias: acidic residues; it reads SDSENAEPDLDDNEEEEEPAVEIEPEP. A compositionally biased stretch (pro residues) spans 637–657; that stretch reads EPQPQPQPQPQPQPVAPAPPP. A compositionally biased stretch (polar residues) spans 668-687; that stretch reads RTNQPKQNQPTAIIQVEDQN. A Glycyl lysine isopeptide (Lys-Gly) (interchain with G-Cter in SUMO); alternate cross-link involves residue Lys-699. Residue Lys-699 forms a Glycyl lysine isopeptide (Lys-Gly) (interchain with G-Cter in SUMO2); alternate linkage. Positions 704-714 are enriched in acidic residues; the sequence is AEPAEGEEEEA.

The protein belongs to the CTCF zinc-finger protein family. Interacts with CHD8. Interacts with LLPH. Interacts with CENPE. Interacts with BRD2; promoting BRD2 recruitment to chromatin. Post-translationally, sumoylated on Lys-74 and Lys-699; sumoylation of CTCF contributes to the repressive function of CTCF on the MYC P2 promoter.

It localises to the nucleus. Its subcellular location is the nucleoplasm. The protein resides in the chromosome. The protein localises to the centromere. Chromatin binding factor that binds to DNA sequence specific sites and regulates the 3D structure of chromatin. Binds together strands of DNA, thus forming chromatin loops, and anchors DNA to cellular structures, such as the nuclear lamina. Defines the boundaries between active and heterochromatic DNA via binding to chromatin insulators, thereby preventing interaction between promoter and nearby enhancers and silencers. Plays a critical role in the epigenetic regulation. Participates in the allele-specific gene expression at the imprinted IGF2/H19 gene locus. On the maternal allele, binding within the H19 imprinting control region (ICR) mediates maternally inherited higher-order chromatin conformation to restrict enhancer access to IGF2. Mediates interchromosomal association between IGF2/H19 and WSB1/NF1 and may direct distant DNA segments to a common transcription factory. Regulates asynchronous replication of IGF2/H19. Plays a critical role in gene silencing over considerable distances in the genome. Preferentially interacts with unmethylated DNA, preventing spreading of CpG methylation and maintaining methylation-free zones. Inversely, binding to target sites is prevented by CpG methylation. Plays an important role in chromatin remodeling. Can dimerize when it is bound to different DNA sequences, mediating long-range chromatin looping. Causes local loss of histone acetylation and gain of histone methylation in the beta-globin locus, without affecting transcription. When bound to chromatin, it provides an anchor point for nucleosomes positioning. Seems to be essential for homologous X-chromosome pairing. May participate with Tsix in establishing a regulatable epigenetic switch for X chromosome inactivation. May play a role in preventing the propagation of stable methylation at the escape genes from X-inactivation. Involved in sister chromatid cohesion. Associates with both centromeres and chromosomal arms during metaphase and required for cohesin localization to CTCF sites. Plays a role in the recruitment of CENPE to the pericentromeric/centromeric regions of the chromosome during mitosis. Acts as a transcriptional repressor binding to promoters of vertebrate MYC gene and BAG1 gene. Also binds to the PLK and PIM1 promoters. Acts as a transcriptional activator of APP. Regulates APOA1/C3/A4/A5 gene cluster and controls MHC class II gene expression. Plays an essential role in oocyte and preimplantation embryo development by activating or repressing transcription. Seems to act as tumor suppressor. This chain is Transcriptional repressor CTCF (Ctcf), found in Rattus norvegicus (Rat).